The chain runs to 388 residues: UDP-N-acetylglucosamine--N-acetylmuramyl-(pentapeptide) pyrophosphoryl-undecaprenol N-acetylglucosamine transferase (388 aa).

UDP-N-acetyl-alpha-D-glucosamine is bound by residues 42-44, N159, R195, S223, I277, and Q322; that span reads TGG.

The protein belongs to the glycosyltransferase 28 family. MurG subfamily.

It localises to the cell inner membrane. The enzyme catalyses di-trans,octa-cis-undecaprenyl diphospho-N-acetyl-alpha-D-muramoyl-L-alanyl-D-glutamyl-meso-2,6-diaminopimeloyl-D-alanyl-D-alanine + UDP-N-acetyl-alpha-D-glucosamine = di-trans,octa-cis-undecaprenyl diphospho-[N-acetyl-alpha-D-glucosaminyl-(1-&gt;4)]-N-acetyl-alpha-D-muramoyl-L-alanyl-D-glutamyl-meso-2,6-diaminopimeloyl-D-alanyl-D-alanine + UDP + H(+). Its pathway is cell wall biogenesis; peptidoglycan biosynthesis. In terms of biological role, cell wall formation. Catalyzes the transfer of a GlcNAc subunit on undecaprenyl-pyrophosphoryl-MurNAc-pentapeptide (lipid intermediate I) to form undecaprenyl-pyrophosphoryl-MurNAc-(pentapeptide)GlcNAc (lipid intermediate II). This is UDP-N-acetylglucosamine--N-acetylmuramyl-(pentapeptide) pyrophosphoryl-undecaprenol N-acetylglucosamine transferase from Albidiferax ferrireducens (strain ATCC BAA-621 / DSM 15236 / T118) (Rhodoferax ferrireducens).